Reading from the N-terminus, the 796-residue chain is MAWDMCNQDSVWSDIECAALVGEDQPLCPDLPELDLSELDVNDLDTDSFLGGLKWCSDQSEIISNQYNNEPSNIFEKIDEENEANLLAVLTETLDSLPVDEDGLPSFDALTDGDVTTENEASPSSMPDGTPPPQEAEEPSLLKKLLLAPANTQLSYNECSGLSTQNHANHNHRIRTNPAVVKTENSWSNKAKSICQQQKPQRRPCSELLKYLTTNDDPPHTKPTENRNSSRDKCTSKKKAHTQSQTQHLQAKPTTLSLPLTPESPNDPKGSPFENKTIERTLSVELSGTAGLTPPTTPPHKANQDNPFRASPKLKPSCKTVVPPPSKKARYSESSCTQGSNSTKKGPEQSELYAQLSKTSVLTSGHEERKAKRPSLRLFGDHDYCQSINSKTEILVSTSQELHDSRQLENKDAPSSNGPGQIHSSTDSDPCYLRETAEVSRQVSPGSTRKQLQDQEIRAELNKHFGHPSQAVFDDKADKTSELRDSDFSNEQFSKLPMFINSGLAMDGLFDDSEDESDKLNSPWDGTQSYSLFDVSPSCSSFNSPCRDSVSPPKSLFSQRPQRMRSRSRSFSRHRSCSRSPYSRSRSRSPGSRSSSRSCYYYESGHCRHRTHRNSPLCASRSRSPHSRRPRYDSYEEYQHERLKREEYRREYEKRESERAKQRERQRQKAIEERRVIYVGKIRPDTTRTELRDRFEVFGEIEECTVNLRDDGDSYGFITYRYTCDAFAALENGYTLRRSNETDFELYFCGRKQFFKSNYADLDSNSDDFDPACIKSKYDSLDFDSLLKEAQRSLRR.

At Lys-77 the chain carries N6-acetyllysine. The tract at residues 98–138 (PVDEDGLPSFDALTDGDVTTENEASPSSMPDGTPPPQEAEE) is disordered. Positions 114–127 (DVTTENEASPSSMP) are enriched in polar residues. The LXXLL motif signature appears at 142–146 (LKKLL). Residue Lys-144 is modified to N6-acetyllysine. Thr-176 carries the phosphothreonine; by AMPK modification. Lys-182 bears the N6-acetyllysine mark. The segment at 211 to 275 (YLTTNDDPPH…NDPKGSPFEN (65 aa)) is disordered. A compositionally biased stretch (basic and acidic residues) spans 217–235 (DPPHTKPTENRNSSRDKCT). The segment covering 242–258 (TQSQTQHLQAKPTTLSL) has biased composition (polar residues). 4 positions are modified to N6-acetyllysine: Lys-252, Lys-269, Lys-276, and Lys-319. Disordered regions lie at residues 288-374 (GTAG…AKRP) and 398-452 (TSQE…RKQL). The interaction with PPARG stretch occupies residues 291–337 (GLTPPTTPPHKANQDNPFRASPKLKPSCKTVVPPPSKKARYSESSCT). Polar residues predominate over residues 332–344 (SESSCTQGSNSTK). N6-acetyllysine occurs at positions 345 and 411. A mediates interaction with RNF34 region spans residues 348 to 796 (EQSELYAQLS…LKEAQRSLRR (449 aa)). A compositionally biased stretch (basic and acidic residues) spans 401 to 412 (ELHDSRQLENKD). 2 stretches are compositionally biased toward polar residues: residues 413-428 (APSSNGPGQIHSSTDS) and 439-450 (VSRQVSPGSTRK). Lys-450 is modified (N6-acetyllysine). Ser-538 is modified (phosphoserine; by AMPK). Disordered stretches follow at residues 542–597 (FNSP…SSSR), 609–637 (HRTHRNSPLCASRSRSPHSRRPRYDSYEE), and 648–667 (YRREYEKRESERAKQRERQR). Over residues 562–577 (QRMRSRSRSFSRHRSC) the composition is skewed to basic residues. Low complexity predominate over residues 578 to 597 (SRSPYSRSRSRSPGSRSSSR). The region spanning 675–751 (RVIYVGKIRP…TDFELYFCGR (77 aa)) is the RRM domain. 2 positions are modified to N6-acetyllysine: Lys-756 and Lys-777.

In terms of assembly, homooligomer. Interacts with MYBBP1A; inhibits MYBBP1A transcriptional activation. Interacts with PRDM16, LPIN1 and PML. Interacts (via LXXLL motif) with RORA and RORC (via AF-2 motif); activates RORA and RORC transcriptional activation. Interacts with LRPPRC. Interacts with FOXO1. Interacts with NR5A2. Phosphorylation by AMPK in skeletal muscle increases activation of its own promoter. Phosphorylated by CLK2. In terms of processing, heavily acetylated by KAT2A/GCN5 under conditions of high nutrients, leading to inactivation of PPARGC1A. Deacetylated by SIRT1 in low nutrients/high NAD conditions, leading to its activation. Post-translationally, ubiquitinated. Ubiquitination by RNF34 induces proteasomal degradation.

It is found in the nucleus. The protein localises to the PML body. Its function is as follows. Transcriptional coactivator for steroid receptors and nuclear receptors. Greatly increases the transcriptional activity of PPARG and thyroid hormone receptor on the uncoupling protein promoter. Can regulate key mitochondrial genes that contribute to the program of adaptive thermogenesis. Plays an essential role in metabolic reprogramming in response to dietary availability through coordination of the expression of a wide array of genes involved in glucose and fatty acid metabolism. Acts as a key regulator of gluconeogenesis: stimulates hepatic gluconeogenesis by increasing the expression of gluconeogenic enzymes, and acting together with FOXO1 to promote the fasting gluconeogenic program. Induces the expression of PERM1 in the skeletal muscle in an ESRRA-dependent manner. Also involved in the integration of the circadian rhythms and energy metabolism. Required for oscillatory expression of clock genes, such as BMAL1 and NR1D1, through the coactivation of RORA and RORC, and metabolic genes, such as PDK4 and PEPCK. The chain is Peroxisome proliferator-activated receptor gamma coactivator 1-alpha (PPARGC1A) from Bos taurus (Bovine).